We begin with the raw amino-acid sequence, 341 residues long: Anthranilate phosphoribosyltransferase (341 aa).

Residues G79, G82–D83, T87, N89–T92, K107–S115, and S119 each bind 5-phospho-alpha-D-ribose 1-diphosphate. Residue G79 participates in anthranilate binding. S91 contributes to the Mg(2+) binding site. An anthranilate-binding site is contributed by N110. R165 is a binding site for anthranilate. D224 and E225 together coordinate Mg(2+).

Belongs to the anthranilate phosphoribosyltransferase family. Homodimer. It depends on Mg(2+) as a cofactor.

The enzyme catalyses N-(5-phospho-beta-D-ribosyl)anthranilate + diphosphate = 5-phospho-alpha-D-ribose 1-diphosphate + anthranilate. Its pathway is amino-acid biosynthesis; L-tryptophan biosynthesis; L-tryptophan from chorismate: step 2/5. Its function is as follows. Catalyzes the transfer of the phosphoribosyl group of 5-phosphorylribose-1-pyrophosphate (PRPP) to anthranilate to yield N-(5'-phosphoribosyl)-anthranilate (PRA). The sequence is that of Anthranilate phosphoribosyltransferase from Symbiobacterium thermophilum (strain DSM 24528 / JCM 14929 / IAM 14863 / T).